The following is a 404-amino-acid chain: Alpha-galactosidase A (404 aa).

An N-terminal signal peptide occupies residues M1–A23. Intrachain disulfides connect C45/C77 and C124/C154. D152 functions as the Nucleophile in the catalytic mechanism. E185–N189 serves as a coordination point for substrate. D207 acts as the Proton donor in catalysis.

Belongs to the glycosyl hydrolase 27 family.

It carries out the reaction Hydrolysis of terminal, non-reducing alpha-D-galactose residues in alpha-D-galactosides, including galactose oligosaccharides, galactomannans and galactolipids.. Its function is as follows. Hydrolyzes galactomannan found in plant cell wall, by cleaving alpha-1,6-D-galactose side-chains from the mannan backbone. Appears to act in synergy with mannanase (ManA) to elicit hydrolysis of galactomannan. Has greater activity against galactomannans with decreased degree of polymerisation values. To a lesser extent, is also able to degrade other galactosides containing alpha-1,6-linked D-galactose, such as melibiose and stachyose. The protein is Alpha-galactosidase A (agaA) of Cellvibrio japonicus (strain Ueda107) (Pseudomonas fluorescens subsp. cellulosa).